The primary structure comprises 409 residues: Aspartic protease pepA (409 aa).

The N-terminal stretch at 1-19 is a signal peptide; the sequence is MPSIVSLTAALTFVGAVIA. A propeptide spans 20–65 (activation peptide); the sequence is SPVEKRSAFSVEQVPHTTYLKNGPAQKVKTLRKYGKPVPQSLLDAA. The Peptidase A1 domain occupies 97 to 404; that stretch reads YLSPVTVGST…PDSPPRIGLA (308 aa). Residues Asp-113 and Asp-293 contribute to the active site. Cys-329 and Cys-364 form a disulfide bridge. N-linked (GlcNAc...) asparagine glycosylation occurs at Asn-335.

This sequence belongs to the peptidase A1 family. Monomer.

The protein localises to the secreted. Functionally, secreted aspartic endopeptidase that allows assimilation of proteinaceous substrates. The scissile peptide bond is attacked by a nucleophilic water molecule activated by two aspartic residues in the active site. Shows a broad primary substrate specificity. Favors hydrophobic residues at the P1 and P1' positions. This is Aspartic protease pepA from Leptosphaeria maculans (strain JN3 / isolate v23.1.3 / race Av1-4-5-6-7-8) (Blackleg fungus).